A 301-amino-acid chain; its full sequence is Large ribosomal subunit protein uL18z (301 aa).

This sequence belongs to the universal ribosomal protein uL18 family. As to quaternary structure, component of the large ribosomal subunit (LSU). Expressed in seedlings, roots, stems, leaves, inflorescences and siliques.

The protein localises to the cytoplasm. It localises to the nucleus. Its subcellular location is the nucleolus. The protein resides in the nucleoplasm. Its function is as follows. Component of the ribosome, a large ribonucleoprotein complex responsible for the synthesis of proteins in the cell. The small ribosomal subunit (SSU) binds messenger RNAs (mRNAs) and translates the encoded message by selecting cognate aminoacyl-transfer RNA (tRNA) molecules. The large subunit (LSU) contains the ribosomal catalytic site termed the peptidyl transferase center (PTC), which catalyzes the formation of peptide bonds, thereby polymerizing the amino acids delivered by tRNAs into a polypeptide chain. The nascent polypeptides leave the ribosome through a tunnel in the LSU and interact with protein factors that function in enzymatic processing, targeting, and the membrane insertion of nascent chains at the exit of the ribosomal tunnel. Seems involved in the regulation of cell proliferation. Essential in leaf polarity establishment, probably having a role for translation in leaf dorsoventral patterning to specify leaf adaxial identity. The polypeptide is Large ribosomal subunit protein uL18z (Arabidopsis thaliana (Mouse-ear cress)).